A 197-amino-acid chain; its full sequence is Ribonuclease HII (197 aa).

An RNase H type-2 domain is found at E14–D197. A divalent metal cation contacts are provided by D20, E21, and D112.

It belongs to the RNase HII family. Mn(2+) serves as cofactor. The cofactor is Mg(2+).

It is found in the cytoplasm. It catalyses the reaction Endonucleolytic cleavage to 5'-phosphomonoester.. Endonuclease that specifically degrades the RNA of RNA-DNA hybrids. This is Ribonuclease HII from Sulfurihydrogenibium sp. (strain YO3AOP1).